A 156-amino-acid chain; its full sequence is 6,7-dimethyl-8-ribityllumazine synthase (156 aa).

5-amino-6-(D-ribitylamino)uracil-binding positions include Phe-22, 57 to 59 (AYE), and 81 to 83 (TVI). Position 86-87 (86-87 (GT)) interacts with (2S)-2-hydroxy-3-oxobutyl phosphate. The Proton donor role is filled by His-89. Residue Phe-114 participates in 5-amino-6-(D-ribitylamino)uracil binding. Arg-128 provides a ligand contact to (2S)-2-hydroxy-3-oxobutyl phosphate.

It belongs to the DMRL synthase family. Forms an icosahedral capsid composed of 60 subunits, arranged as a dodecamer of pentamers.

It catalyses the reaction (2S)-2-hydroxy-3-oxobutyl phosphate + 5-amino-6-(D-ribitylamino)uracil = 6,7-dimethyl-8-(1-D-ribityl)lumazine + phosphate + 2 H2O + H(+). It participates in cofactor biosynthesis; riboflavin biosynthesis; riboflavin from 2-hydroxy-3-oxobutyl phosphate and 5-amino-6-(D-ribitylamino)uracil: step 1/2. Its function is as follows. Catalyzes the formation of 6,7-dimethyl-8-ribityllumazine by condensation of 5-amino-6-(D-ribitylamino)uracil with 3,4-dihydroxy-2-butanone 4-phosphate. This is the penultimate step in the biosynthesis of riboflavin. The polypeptide is 6,7-dimethyl-8-ribityllumazine synthase (Enterobacter sp. (strain 638)).